The following is a 398-amino-acid chain: uncharacterized protein (398 aa).

Residues 88–108 traverse the membrane as a helical segment; that stretch reads IGFTIGFAIFFILLFLLSNMV.

The protein to B.megaterium SpoIV.

The protein localises to the cell membrane. This is an uncharacterized protein from Bacillus subtilis (strain 168).